The chain runs to 495 residues: 4-aminobutyrate aminotransferase (495 aa).

160-161 serves as a coordination point for pyridoxal 5'-phosphate; it reads GS. Arginine 216 lines the substrate pocket. An N6-(pyridoxal phosphate)lysine modification is found at lysine 350. Residue threonine 374 coordinates pyridoxal 5'-phosphate.

It belongs to the class-III pyridoxal-phosphate-dependent aminotransferase family. In terms of assembly, homodimer. Pyridoxal 5'-phosphate serves as cofactor.

It carries out the reaction 4-aminobutanoate + 2-oxoglutarate = succinate semialdehyde + L-glutamate. This chain is 4-aminobutyrate aminotransferase (gabT), found in Dictyostelium discoideum (Social amoeba).